Consider the following 486-residue polypeptide: Outer dynein arm-docking complex subunit 4 (486 aa).

TPR repeat units lie at residues 14 to 47 (FTTY…QPDD), 49 to 81 (NCLV…NKNY), and 82 to 115 (FKGL…RPEL). The disordered stretch occupies residues 153–180 (GVHPQNLNPSNKKESKKHSKKTDKGEKT). 4 TPR repeats span residues 314 to 347 (GNLH…AKKC), 354 to 387 (SRAL…ACGG), 391 to 424 (AWLF…ADDI), and 431 to 464 (LNAS…AKLL).

In terms of assembly, component of the outer dynein arm-docking complex along with ODAD1, ODAD2 and ODAD3.

Its subcellular location is the cytoplasm. It localises to the cytoskeleton. It is found in the cilium axoneme. Its function is as follows. Component of the outer dynein arm-docking complex (ODA-DC) that mediates outer dynein arms (ODA) binding onto the doublet microtubule. Plays an essential role for the assembly of ODA-DC and in the docking of ODA in ciliary axoneme. The chain is Outer dynein arm-docking complex subunit 4 (odad4) from Danio rerio (Zebrafish).